A 355-amino-acid chain; its full sequence is 3-dehydroquinate synthase (355 aa).

NAD(+) is bound by residues 71–76 (EGEERK), 105–109 (GVVGD), 129–130 (TS), lysine 142, and lysine 151. Zn(2+) contacts are provided by glutamate 184, histidine 246, and histidine 263.

Belongs to the sugar phosphate cyclases superfamily. Dehydroquinate synthase family. Co(2+) is required as a cofactor. Requires Zn(2+) as cofactor. It depends on NAD(+) as a cofactor.

Its subcellular location is the cytoplasm. The catalysed reaction is 7-phospho-2-dehydro-3-deoxy-D-arabino-heptonate = 3-dehydroquinate + phosphate. It participates in metabolic intermediate biosynthesis; chorismate biosynthesis; chorismate from D-erythrose 4-phosphate and phosphoenolpyruvate: step 2/7. Functionally, catalyzes the conversion of 3-deoxy-D-arabino-heptulosonate 7-phosphate (DAHP) to dehydroquinate (DHQ). This Streptococcus pneumoniae serotype 19F (strain G54) protein is 3-dehydroquinate synthase.